The primary structure comprises 592 residues: Glutamine--fructose-6-phosphate aminotransferase [isomerizing] (592 aa).

The active-site Nucleophile; for GATase activity is the Cys-2. The Glutamine amidotransferase type-2 domain occupies 2 to 217 (CGIVGYVGRD…DGEIADLTPD (216 aa)). SIS domains lie at 277-416 (IPFK…EREN) and 441-582 (VAEK…VDQP). The active-site For Fru-6P isomerization activity is Lys-587.

Homodimer.

The protein localises to the cytoplasm. It catalyses the reaction D-fructose 6-phosphate + L-glutamine = D-glucosamine 6-phosphate + L-glutamate. Catalyzes the first step in hexosamine metabolism, converting fructose-6P into glucosamine-6P using glutamine as a nitrogen source. The chain is Glutamine--fructose-6-phosphate aminotransferase [isomerizing] from Aquifex aeolicus (strain VF5).